The following is a 132-amino-acid chain: Small ribosomal subunit protein uS8c (132 aa).

This sequence belongs to the universal ribosomal protein uS8 family. In terms of assembly, part of the 30S ribosomal subunit.

Its subcellular location is the plastid. It localises to the chloroplast. Functionally, one of the primary rRNA binding proteins, it binds directly to 16S rRNA central domain where it helps coordinate assembly of the platform of the 30S subunit. This Guillardia theta (Cryptophyte) protein is Small ribosomal subunit protein uS8c (rps8).